The chain runs to 209 residues: Large ribosomal subunit protein bL9 (209 aa).

Positions 181–209 (EASEEGQELAAQREATEDAGADESEETEA) are disordered. Residues 197-209 (EDAGADESEETEA) show a composition bias toward acidic residues.

This sequence belongs to the bacterial ribosomal protein bL9 family.

Binds to the 23S rRNA. This chain is Large ribosomal subunit protein bL9, found in Maricaulis maris (strain MCS10) (Caulobacter maris).